Here is a 129-residue protein sequence, read N- to C-terminus: MSIEFDDSSRHNMNMTQLMQLGAFDRRSGDDFMVQDFKNGIRDCSGIPVNNRNLAFKAYDAVKQKCDSSIKVFNIQDITIKGATWQHHNCQSTGKWYSQLYDYQNTFIGKQEYNILFDCYSYLKYNLNG.

It is found in the cytoplasm. The protein localises to the cytosol. It localises to the nucleus. This is an uncharacterized protein from Schizosaccharomyces pombe (strain 972 / ATCC 24843) (Fission yeast).